The chain runs to 295 residues: MSSYGRTRTDLKKHKLAPKKRFGQNFLVHKQTAEAIVRAGEVGEDDIITEIGVGLGALTVPMAHQAKHVYGIEIDNGIIKYHEEEQDLPDNVTLIHQDVLKVGFGDLAEKCGGKLKILANLPYSISHPLIFKLIEHRDIIPTATIMLQEEVADRLLAKPGTKEYGIPTILLGCCASIKKKMVLKPAEFHPRPKIDSAVITVDFTKPPELPEYNKELLSRVVRSAFSQRRKTILNTLSSASFFFAEKENKAKNKAMTEKTIEKAGFAVSLRPEVLSIQDFVRLTTVFEQEMNRTEE.

S-adenosyl-L-methionine is bound by residues N25, L27, G52, E73, D98, and N120.

The protein belongs to the class I-like SAM-binding methyltransferase superfamily. rRNA adenine N(6)-methyltransferase family. RsmA subfamily.

The protein localises to the cytoplasm. It catalyses the reaction adenosine(1518)/adenosine(1519) in 16S rRNA + 4 S-adenosyl-L-methionine = N(6)-dimethyladenosine(1518)/N(6)-dimethyladenosine(1519) in 16S rRNA + 4 S-adenosyl-L-homocysteine + 4 H(+). Functionally, specifically dimethylates two adjacent adenosines (A1518 and A1519) in the loop of a conserved hairpin near the 3'-end of 16S rRNA in the 30S particle. May play a critical role in biogenesis of 30S subunits. The polypeptide is Ribosomal RNA small subunit methyltransferase A (Desulfotalea psychrophila (strain LSv54 / DSM 12343)).